The following is a 131-amino-acid chain: Profilin-8 (131 aa).

The cysteines at positions 13 and 115 are disulfide-linked. An Involved in PIP2 interaction motif is present at residues 81–97 (AVIRGKKGSGGITVKKT). Thr-111 bears the Phosphothreonine mark.

The protein belongs to the profilin family. In terms of assembly, occurs in many kinds of cells as a complex with monomeric actin in a 1:1 ratio. In terms of processing, phosphorylated by MAP kinases.

The protein localises to the cytoplasm. It is found in the cytoskeleton. Functionally, binds to actin and affects the structure of the cytoskeleton. At high concentrations, profilin prevents the polymerization of actin, whereas it enhances it at low concentrations. The sequence is that of Profilin-8 from Zea mays (Maize).